A 236-amino-acid chain; its full sequence is Pyridoxal 5'-phosphate synthase subunit PdxT (236 aa).

61 to 63 (GES) contributes to the L-glutamine binding site. C93 acts as the Nucleophile in catalysis. Residues R127 and 163–164 (IR) contribute to the L-glutamine site. Residues H215 and E217 each act as charge relay system in the active site.

It belongs to the glutaminase PdxT/SNO family. In the presence of PdxS, forms a dodecamer of heterodimers. Only shows activity in the heterodimer.

It carries out the reaction aldehydo-D-ribose 5-phosphate + D-glyceraldehyde 3-phosphate + L-glutamine = pyridoxal 5'-phosphate + L-glutamate + phosphate + 3 H2O + H(+). It catalyses the reaction L-glutamine + H2O = L-glutamate + NH4(+). It participates in cofactor biosynthesis; pyridoxal 5'-phosphate biosynthesis. In terms of biological role, catalyzes the hydrolysis of glutamine to glutamate and ammonia as part of the biosynthesis of pyridoxal 5'-phosphate. The resulting ammonia molecule is channeled to the active site of PdxS. In Arthrobacter sp. (strain FB24), this protein is Pyridoxal 5'-phosphate synthase subunit PdxT.